The sequence spans 419 residues: Serine hydroxymethyltransferase (419 aa).

(6S)-5,6,7,8-tetrahydrofolate contacts are provided by residues Leu-121 and 125-127 (GHL). N6-(pyridoxal phosphate)lysine is present on Lys-229. 354–356 (SPF) contacts (6S)-5,6,7,8-tetrahydrofolate.

It belongs to the SHMT family. As to quaternary structure, homodimer. Pyridoxal 5'-phosphate serves as cofactor.

Its subcellular location is the cytoplasm. The enzyme catalyses (6R)-5,10-methylene-5,6,7,8-tetrahydrofolate + glycine + H2O = (6S)-5,6,7,8-tetrahydrofolate + L-serine. It participates in one-carbon metabolism; tetrahydrofolate interconversion. It functions in the pathway amino-acid biosynthesis; glycine biosynthesis; glycine from L-serine: step 1/1. In terms of biological role, catalyzes the reversible interconversion of serine and glycine with tetrahydrofolate (THF) serving as the one-carbon carrier. This reaction serves as the major source of one-carbon groups required for the biosynthesis of purines, thymidylate, methionine, and other important biomolecules. Also exhibits THF-independent aldolase activity toward beta-hydroxyamino acids, producing glycine and aldehydes, via a retro-aldol mechanism. The polypeptide is Serine hydroxymethyltransferase (Coxiella burnetii (strain RSA 493 / Nine Mile phase I)).